A 406-amino-acid polypeptide reads, in one-letter code: MKNEVKKVVLAYSGGLDTSIILKWLQDEYNCEVVTFTADIGQGEELEPARKKALSLGIKEENIFIKDLRDEFVKDYVFPMFRANAIYEGEYLLGTSIARPLIAKTQAQIALQTGADAVSHGATGKGNDQVRFELGYLAFNPDLKIIAPWREWDLNSREKLLAYAQKHGIDISKKKGKSPYSMDANLLHISYEGLVLEDPAHAPEEDMWRWSKSPKDAPNESEIIELDFQKGDLVAINGEKLSPAGLLTKLNELGCKHGIGRLDIVENRYVGMKSRGCYETPGGTILLKAHRALESITLDREAAHLKDELMPKYASLIYNGYWFSPERMMLQALIDESQIHANGRVKLELYKGNVMVIGRESANDSLFNAAYCTFEEDEVYNQKDAAGFIKLNALRFIIAGKNGRKF.

ATP is bound by residues 11-19 (AYSGGLDTS) and Ala38. Positions 91 and 96 each coordinate L-citrulline. Gly121 contacts ATP. L-aspartate contacts are provided by Thr123, Asn127, and Asp128. Asn127 serves as a coordination point for L-citrulline. L-citrulline-binding residues include Arg131, Ser181, Ser190, Glu266, and Tyr278.

The protein belongs to the argininosuccinate synthase family. Type 1 subfamily. Homotetramer.

The protein resides in the cytoplasm. The catalysed reaction is L-citrulline + L-aspartate + ATP = 2-(N(omega)-L-arginino)succinate + AMP + diphosphate + H(+). Its pathway is amino-acid biosynthesis; L-arginine biosynthesis; L-arginine from L-ornithine and carbamoyl phosphate: step 2/3. The sequence is that of Argininosuccinate synthase from Campylobacter jejuni subsp. jejuni serotype O:23/36 (strain 81-176).